The sequence spans 506 residues: Kynurenine 3-monooxygenase (506 aa).

Belongs to the aromatic-ring hydroxylase family. KMO subfamily. Requires FAD as cofactor.

It is found in the mitochondrion outer membrane. The enzyme catalyses L-kynurenine + NADPH + O2 + H(+) = 3-hydroxy-L-kynurenine + NADP(+) + H2O. It functions in the pathway cofactor biosynthesis; NAD(+) biosynthesis; quinolinate from L-kynurenine: step 1/3. Its function is as follows. Catalyzes the hydroxylation of L-kynurenine (L-Kyn) to form 3-hydroxy-L-kynurenine (L-3OHKyn). Required for synthesis of quinolinic acid. This is Kynurenine 3-monooxygenase (bna4) from Emericella nidulans (strain FGSC A4 / ATCC 38163 / CBS 112.46 / NRRL 194 / M139) (Aspergillus nidulans).